The primary structure comprises 1369 residues: Phosphoribosylformylglycinamidine synthase (1369 aa).

Disordered regions lie at residues 321-352 and 373-400; these read HPTAISPFPGASTGAGGEIRDEGATGRGAKPK and ENARDTAQPAAQRNPGDTAPGPVGKPDR. 330–341 provides a ligand contact to ATP; the sequence is GASTGAGGEIRD. Residue Ala721 coordinates ATP. Residues Asp722, Glu761, Asn765, and Asp934 each coordinate Mg(2+). Residue Ser936 coordinates ATP. In terms of domain architecture, Glutamine amidotransferase type-1 spans 1116 to 1369; sequence MAILREQGVN…MFRNARKQMG (254 aa). Cys1209 acts as the Nucleophile in catalysis. Active-site residues include His1330 and Glu1332.

The protein in the N-terminal section; belongs to the FGAMS family. Monomer.

The protein localises to the cytoplasm. The enzyme catalyses N(2)-formyl-N(1)-(5-phospho-beta-D-ribosyl)glycinamide + L-glutamine + ATP + H2O = 2-formamido-N(1)-(5-O-phospho-beta-D-ribosyl)acetamidine + L-glutamate + ADP + phosphate + H(+). It participates in purine metabolism; IMP biosynthesis via de novo pathway; 5-amino-1-(5-phospho-D-ribosyl)imidazole from N(2)-formyl-N(1)-(5-phospho-D-ribosyl)glycinamide: step 1/2. Functionally, phosphoribosylformylglycinamidine synthase involved in the purines biosynthetic pathway. Catalyzes the ATP-dependent conversion of formylglycinamide ribonucleotide (FGAR) and glutamine to yield formylglycinamidine ribonucleotide (FGAM) and glutamate. The chain is Phosphoribosylformylglycinamidine synthase from Ralstonia nicotianae (strain ATCC BAA-1114 / GMI1000) (Ralstonia solanacearum).